Reading from the N-terminus, the 395-residue chain is Chaperone protein DnaJ (395 aa).

One can recognise a J domain in the interval aspartate 4–glycine 69. Residues glycine 152–glutamate 233 form a CR-type zinc finger. 8 residues coordinate Zn(2+): cysteine 165, cysteine 168, cysteine 181, cysteine 184, cysteine 207, cysteine 210, cysteine 221, and cysteine 224. 4 CXXCXGXG motif repeats span residues cysteine 165 to glycine 172, cysteine 181 to glycine 188, cysteine 207 to glycine 214, and cysteine 221 to glycine 228.

Belongs to the DnaJ family. As to quaternary structure, homodimer. Requires Zn(2+) as cofactor.

The protein localises to the cytoplasm. Its function is as follows. Participates actively in the response to hyperosmotic and heat shock by preventing the aggregation of stress-denatured proteins and by disaggregating proteins, also in an autonomous, DnaK-independent fashion. Unfolded proteins bind initially to DnaJ; upon interaction with the DnaJ-bound protein, DnaK hydrolyzes its bound ATP, resulting in the formation of a stable complex. GrpE releases ADP from DnaK; ATP binding to DnaK triggers the release of the substrate protein, thus completing the reaction cycle. Several rounds of ATP-dependent interactions between DnaJ, DnaK and GrpE are required for fully efficient folding. Also involved, together with DnaK and GrpE, in the DNA replication of plasmids through activation of initiation proteins. The polypeptide is Chaperone protein DnaJ (Prosthecochloris aestuarii (strain DSM 271 / SK 413)).